Reading from the N-terminus, the 311-residue chain is Aquaporin NIP3-1 (311 aa).

The disordered stretch occupies residues 1–34; sequence MEMAAPNGGGAAGMSSPVNGASAPATPGTPAPLF. Positions 20 to 34 are enriched in low complexity; it reads GASAPATPGTPAPLF. 2 helical membrane passes run 85-105 and 111-131; these read LGAE…APIV and GAIS…TIIL. Positions 142 to 144 match the NPA 1 motif; that stretch reads NPS. The next 3 helical transmembrane spans lie at 158–178, 202–222, and 226–246; these read LQVP…GFAL, AFFT…AVAT, and AVGE…ILIA. The NPA 2 motif lies at 255-257; the sequence is NPV. The chain crosses the membrane as a helical span at residues 273–293; the sequence is WIYLIAPTLGAVAGAGVYTAV.

It belongs to the MIP/aquaporin (TC 1.A.8) family. NIP (TC 1.A.8.12) subfamily. Expressed in roots and leaves.

Its subcellular location is the membrane. Aquaporins facilitate the transport of water and small neutral solutes across cell membranes. This Oryza sativa subsp. japonica (Rice) protein is Aquaporin NIP3-1 (NIP3-1).